We begin with the raw amino-acid sequence, 363 residues long: Pyrimidine monooxygenase RutA (363 aa).

FMN is bound by residues 49-50 (IK), asparagine 115, glutamate 124, 140-141 (RY), and serine 190.

Belongs to the NtaA/SnaA/DszA monooxygenase family. RutA subfamily.

The catalysed reaction is uracil + FMNH2 + NADH + O2 = (Z)-3-ureidoacrylate + FMN + NAD(+) + H2O + H(+). It carries out the reaction thymine + FMNH2 + NADH + O2 = (Z)-2-methylureidoacrylate + FMN + NAD(+) + H2O + H(+). Catalyzes the pyrimidine ring opening between N-3 and C-4 by an unusual flavin hydroperoxide-catalyzed mechanism, adding oxygen atoms in the process to yield ureidoacrylate peracid, that immediately reacts with FMN forming ureidoacrylate and FMN-N(5)-oxide. The FMN-N(5)-oxide reacts spontaneously with NADH to produce FMN. Requires the flavin reductase RutF to regenerate FMN in vivo. In Enterobacter sp. (strain 638), this protein is Pyrimidine monooxygenase RutA.